We begin with the raw amino-acid sequence, 375 residues long: tRNA-specific 2-thiouridylase MnmA (375 aa).

ATP is bound by residues 7–14 (GLSGGVDS) and Met-33. The interval 102-104 (NPD) is interaction with target base in tRNA. Cys-107 serves as the catalytic Nucleophile. An intrachain disulfide couples Cys-107 to Cys-205. Residue Gly-132 coordinates ATP. The segment at 155 to 157 (KDQ) is interaction with tRNA. The active-site Cysteine persulfide intermediate is Cys-205. Residues 313-314 (RY) are interaction with tRNA.

This sequence belongs to the MnmA/TRMU family.

The protein localises to the cytoplasm. It catalyses the reaction S-sulfanyl-L-cysteinyl-[protein] + uridine(34) in tRNA + AH2 + ATP = 2-thiouridine(34) in tRNA + L-cysteinyl-[protein] + A + AMP + diphosphate + H(+). Its function is as follows. Catalyzes the 2-thiolation of uridine at the wobble position (U34) of tRNA, leading to the formation of s(2)U34. The sequence is that of tRNA-specific 2-thiouridylase MnmA from Phytoplasma australiense.